Here is a 94-residue protein sequence, read N- to C-terminus: Co-chaperonin GroES (94 aa).

This sequence belongs to the GroES chaperonin family. As to quaternary structure, heptamer of 7 subunits arranged in a ring. Interacts with the chaperonin GroEL.

The protein resides in the cytoplasm. Together with the chaperonin GroEL, plays an essential role in assisting protein folding. The GroEL-GroES system forms a nano-cage that allows encapsulation of the non-native substrate proteins and provides a physical environment optimized to promote and accelerate protein folding. GroES binds to the apical surface of the GroEL ring, thereby capping the opening of the GroEL channel. This Caldanaerobacter subterraneus subsp. tengcongensis (strain DSM 15242 / JCM 11007 / NBRC 100824 / MB4) (Thermoanaerobacter tengcongensis) protein is Co-chaperonin GroES.